The following is a 455-amino-acid chain: Phosphoglucosamine/phosphogalactosamine mutase (455 aa).

Residue Ser-97 is the Phosphoserine intermediate of the active site. Residues Ser-97, Asp-241, Asp-243, and Asp-245 each contribute to the Mg(2+) site. Position 97 is a phosphoserine (Ser-97).

Belongs to the phosphohexose mutase family. Requires Mg(2+) as cofactor. Activated by phosphorylation.

The catalysed reaction is alpha-D-glucosamine 1-phosphate = D-glucosamine 6-phosphate. It catalyses the reaction D-galactosamine 6-phosphate = alpha-D-galactosamine 1-phosphate. In terms of biological role, involved in the synthesis of UDP-N-acetylglucosamine (UDP-GlcNAc) and UDP-N-acetylgalactosamine (UDP-GalNAc). Catalyzes the conversion of glucosamine-6-phosphate to glucosamine-1-phosphate and of galactosamine-6-phosphate to galactosamine-1-phosphate. The polypeptide is Phosphoglucosamine/phosphogalactosamine mutase (Sulfurisphaera tokodaii (strain DSM 16993 / JCM 10545 / NBRC 100140 / 7) (Sulfolobus tokodaii)).